The following is a 273-amino-acid chain: Putative pyruvate, phosphate dikinase regulatory protein (273 aa).

G149 to T156 provides a ligand contact to ADP.

It belongs to the pyruvate, phosphate/water dikinase regulatory protein family. PDRP subfamily.

It catalyses the reaction N(tele)-phospho-L-histidyl/L-threonyl-[pyruvate, phosphate dikinase] + ADP = N(tele)-phospho-L-histidyl/O-phospho-L-threonyl-[pyruvate, phosphate dikinase] + AMP + H(+). It carries out the reaction N(tele)-phospho-L-histidyl/O-phospho-L-threonyl-[pyruvate, phosphate dikinase] + phosphate + H(+) = N(tele)-phospho-L-histidyl/L-threonyl-[pyruvate, phosphate dikinase] + diphosphate. Functionally, bifunctional serine/threonine kinase and phosphorylase involved in the regulation of the pyruvate, phosphate dikinase (PPDK) by catalyzing its phosphorylation/dephosphorylation. This is Putative pyruvate, phosphate dikinase regulatory protein from Rickettsia africae (strain ESF-5).